The primary structure comprises 135 residues: Interleukin-4 (135 aa).

The first 24 residues, 1 to 24 (MGLTYQLIPVLVCLLVCTSHFVHG), serve as a signal peptide directing secretion. Disulfide bonds link cysteine 27/cysteine 135, cysteine 48/cysteine 85, and cysteine 70/cysteine 105. Residue asparagine 62 is glycosylated (N-linked (GlcNAc...) asparagine).

Belongs to the IL-4/IL-13 family.

The protein resides in the secreted. In terms of biological role, participates in at least several B-cell activation processes as well as of other cell types. It is a costimulator of DNA-synthesis. It induces the expression of class II MHC molecules on resting B-cells. It enhances both secretion and cell surface expression of IgE and IgG1. It also regulates the expression of the low affinity Fc receptor for IgE (CD23) on both lymphocytes and monocytes. Positively regulates IL31RA expression in macrophages. Stimulates autophagy in dendritic cells by interfering with mTORC1 signaling and through the induction of RUFY4. The polypeptide is Interleukin-4 (IL4) (Bubalus carabanensis (Swamp type water buffalo)).